Consider the following 30-residue polypeptide: Root cyclotide 1 (30 aa).

The segment at residues 1 to 30 (GIPCAESCVWIPCTVTALLGCSCSNKVCYN) is a cross-link (cyclopeptide (Gly-Asn)). Disulfide bonds link cysteine 4–cysteine 21, cysteine 8–cysteine 23, and cysteine 13–cysteine 28.

In terms of processing, this is a cyclic peptide. As to expression, expressed in roots.

Its function is as follows. Probably participates in a plant defense mechanism. In Viola hederacea (Australian violet), this protein is Root cyclotide 1.